A 303-amino-acid polypeptide reads, in one-letter code: Pycsar effector protein XpPycTIR (303 aa).

14-138 (LVATLTEHRL…RRIAATLARR (125 aa)) serves as a coordination point for a nucleoside 3',5'-cyclic phosphate. The TIR-like stretch occupies residues 154-273 (RVFIMSSVEA…DLAGLTTIPY (120 aa)).

It is found in the cytoplasm. It catalyses the reaction NAD(+) + H2O = ADP-D-ribose + nicotinamide + H(+). Its function is as follows. Pycsar (pyrimidine cyclase system for antiphage resistance) provides immunity against bacteriophage. The pyrimidine cyclase (PycC) synthesizes cyclic nucleotides in response to infection; these serve as specific second messenger signals. The signals activate the adjacent effector, leading to bacterial cell death and abortive phage infection. A clade B Pycsar system. Functionally, the effector gene of a two-gene Pycsar system. Expression of this and adjacent uridylate cyclase XpPycC (AC P0DV28) confers resistance to bacteriophage T7. When cells expressing the Pycsar system are infected by phage T7 at low multiplicity of infection (0.2 MOI) the culture survivey, at 2.0 MOI bacteria enter growth arrest. The same cells enter growth arrest after exposure to 2.5 mM cUMP but not cCMP; the effector protein responds only to the cUMP usually produced by its cognate NTP cyclase. NAD(+) levels in infected cells are depleted between 5 and 10 minutes after infection with T7 at MOI of 2. Probably only responds to cUMP. In Xanthomonas perforans, this protein is Pycsar effector protein XpPycTIR.